We begin with the raw amino-acid sequence, 86 residues long: Mu-theraphotoxin-Hhn1c (86 aa).

Positions 1–21 (MKASMFLALAGLALLFVVCYA) are cleaved as a signal peptide. Residues 22-49 (SESEEKEFSNELLSSVLAVDDNSKGEER) constitute a propeptide that is removed on maturation. 3 disulfides stabilise this stretch: Cys51–Cys66, Cys58–Cys73, and Cys65–Cys80. An Isoleucine amide modification is found at Ile84.

This sequence belongs to the neurotoxin 10 (Hwtx-1) family. 22 (Htx-4) subfamily. As to quaternary structure, monomer. As to expression, expressed by the venom gland.

The protein localises to the secreted. Functionally, neurotoxin. Selectively blocks neuronal tetrodotoxin-sensitive voltage-gated sodium channels (Nav). Does not affect tetrodotoxin-resistant voltage-gated sodium channels or calcium channels. The polypeptide is Mu-theraphotoxin-Hhn1c (Cyriopagopus hainanus (Chinese bird spider)).